A 115-amino-acid chain; its full sequence is NADH-ubiquinone oxidoreductase chain 3 (115 aa).

3 helical membrane passes run 4-24 (LTALLVNITLSMLLIIIAFWL), 55-75 (FFLVAITFLLFDLEIALLLPL), and 83-103 (YINIMMSTAFILVSVLALGLA).

Belongs to the complex I subunit 3 family. In terms of assembly, core subunit of respiratory chain NADH dehydrogenase (Complex I) which is composed of 45 different subunits. Interacts with TMEM186. Interacts with TMEM242.

The protein resides in the mitochondrion inner membrane. The enzyme catalyses a ubiquinone + NADH + 5 H(+)(in) = a ubiquinol + NAD(+) + 4 H(+)(out). In terms of biological role, core subunit of the mitochondrial membrane respiratory chain NADH dehydrogenase (Complex I) which catalyzes electron transfer from NADH through the respiratory chain, using ubiquinone as an electron acceptor. Essential for the catalytic activity of complex I. This Peromyscus polionotus (Oldfield mouse) protein is NADH-ubiquinone oxidoreductase chain 3.